Reading from the N-terminus, the 157-residue chain is Alanyl-tRNA editing protein AlaX-S (157 aa).

Residues His9, His13, Cys116, and His120 each coordinate Zn(2+).

It belongs to the class-II aminoacyl-tRNA synthetase family. Editing domain AlaX-S subfamily. In terms of assembly, monomer and homodimer; the dimer is less active in tRNA editing and does not have a zinc ion associated with it. Another report shows only a monomeric form. Zn(2+) is required as a cofactor.

It localises to the cytoplasm. Functionally, functions in trans to edit the amino acid moiety from mischarged charged Ser-tRNA(Ala). Has little activity against Gly-tRNA(Ala). The polypeptide is Alanyl-tRNA editing protein AlaX-S (alaXS) (Pyrococcus horikoshii (strain ATCC 700860 / DSM 12428 / JCM 9974 / NBRC 100139 / OT-3)).